We begin with the raw amino-acid sequence, 522 residues long: N-acetylgalactosamine-6-sulfatase (522 aa).

An N-terminal signal peptide occupies residues 1–25 (MAAVAAATRWHLLLVLSAAGLGVTG). A catalytic domain region spans residues 27-379 (PQPPNILLLL…PAMLQGRLTE (353 aa)). Asp-38, Asp-39, and Cys-78 together coordinate Ca(2+). Cys-78 (nucleophile) is an active-site residue. Position 78 is a 3-oxoalanine (Cys) (Cys-78). Residue His-141 is part of the active site. Asn-203 carries N-linked (GlcNAc...) asparagine glycosylation. The Ca(2+) site is built by Asp-288 and Asn-289. Cys-308 and Cys-419 are joined by a disulfide. Residue Asn-423 is glycosylated (N-linked (GlcNAc...) asparagine). 2 cysteine pairs are disulfide-bonded: Cys-489-Cys-518 and Cys-501-Cys-507.

Belongs to the sulfatase family. In terms of assembly, homodimer. The cofactor is Ca(2+). In terms of processing, the conversion to 3-oxoalanine (also known as C-formylglycine, FGly), of a serine or cysteine residue in prokaryotes and of a cysteine residue in eukaryotes, is critical for catalytic activity.

Its subcellular location is the lysosome. The enzyme catalyses Hydrolysis of the 6-sulfate groups of the N-acetyl-D-galactosamine 6-sulfate units of chondroitin sulfate and of the D-galactose 6-sulfate units of keratan sulfate.. This chain is N-acetylgalactosamine-6-sulfatase (GALNS), found in Sus scrofa (Pig).